The primary structure comprises 122 residues: Large ribosomal subunit protein uL18 (122 aa).

Belongs to the universal ribosomal protein uL18 family. As to quaternary structure, part of the 50S ribosomal subunit; part of the 5S rRNA/L5/L18/L25 subcomplex. Contacts the 5S and 23S rRNAs.

Its function is as follows. This is one of the proteins that bind and probably mediate the attachment of the 5S RNA into the large ribosomal subunit, where it forms part of the central protuberance. This is Large ribosomal subunit protein uL18 from Mycobacterium leprae (strain TN).